Reading from the N-terminus, the 278-residue chain is 3-methyl-2-oxobutanoate hydroxymethyltransferase 1 (278 aa).

The Mg(2+) site is built by Asp49 and Asp88. Residues 49–50, Asp88, and Lys118 each bind 3-methyl-2-oxobutanoate; that span reads DS. Glu120 is a binding site for Mg(2+). Glu187 (proton acceptor) is an active-site residue.

Belongs to the PanB family. As to quaternary structure, homodecamer; pentamer of dimers. The cofactor is Mg(2+).

Its subcellular location is the cytoplasm. The enzyme catalyses 3-methyl-2-oxobutanoate + (6R)-5,10-methylene-5,6,7,8-tetrahydrofolate + H2O = 2-dehydropantoate + (6S)-5,6,7,8-tetrahydrofolate. It participates in cofactor biosynthesis; (R)-pantothenate biosynthesis; (R)-pantoate from 3-methyl-2-oxobutanoate: step 1/2. Catalyzes the reversible reaction in which hydroxymethyl group from 5,10-methylenetetrahydrofolate is transferred onto alpha-ketoisovalerate to form ketopantoate. The polypeptide is 3-methyl-2-oxobutanoate hydroxymethyltransferase 1 (Hahella chejuensis (strain KCTC 2396)).